Reading from the N-terminus, the 480-residue chain is uncharacterized protein (480 aa).

This is an uncharacterized protein from Xylella fastidiosa (strain 9a5c).